We begin with the raw amino-acid sequence, 558 residues long: Arginine--tRNA ligase (558 aa).

A 'HIGH' region motif is present at residues 119–129 (PNIAKPMSMGH).

Belongs to the class-I aminoacyl-tRNA synthetase family. As to quaternary structure, monomer.

Its subcellular location is the cytoplasm. The enzyme catalyses tRNA(Arg) + L-arginine + ATP = L-arginyl-tRNA(Arg) + AMP + diphosphate. The polypeptide is Arginine--tRNA ligase (Lactobacillus johnsonii (strain CNCM I-12250 / La1 / NCC 533)).